A 511-amino-acid chain; its full sequence is Ribonuclease Y (511 aa).

The chain crosses the membrane as a helical span at residues 3–23 (VGILIGIIILGVVGFIQYTLI). The 86-residue stretch at 201 to 286 (TVHVVALPND…EMVERAIKDV (86 aa)) folds into the KH domain. Positions 327–420 (VLKHSIEVSY…VQAADAISAA (94 aa)) constitute an HD domain.

It belongs to the RNase Y family.

The protein resides in the cell membrane. Its function is as follows. Endoribonuclease that initiates mRNA decay. The polypeptide is Ribonuclease Y (Clostridium perfringens (strain ATCC 13124 / DSM 756 / JCM 1290 / NCIMB 6125 / NCTC 8237 / Type A)).